Consider the following 213-residue polypeptide: Uridine kinase (213 aa).

15–22 (GASASGKS) lines the ATP pocket.

This sequence belongs to the uridine kinase family.

It is found in the cytoplasm. The catalysed reaction is uridine + ATP = UMP + ADP + H(+). The enzyme catalyses cytidine + ATP = CMP + ADP + H(+). The protein operates within pyrimidine metabolism; CTP biosynthesis via salvage pathway; CTP from cytidine: step 1/3. It functions in the pathway pyrimidine metabolism; UMP biosynthesis via salvage pathway; UMP from uridine: step 1/1. This Enterobacter sp. (strain 638) protein is Uridine kinase.